The primary structure comprises 402 residues: mRNA-capping enzyme subunit alpha (402 aa).

The N6-GMP-lysine intermediate role is filled by Lys67. Residues 374–402 form a disordered region; that stretch reads SVTKRKLDETSNDDAPAIKKVAKESEKEI.

The protein belongs to the eukaryotic GTase family. Heterodimer. The mRNA-capping enzyme is composed of two separate chains alpha and beta, respectively a mRNA guanylyltransferase and an mRNA 5'-triphosphate monophosphatase.

It localises to the nucleus. The enzyme catalyses a 5'-end diphospho-ribonucleoside in mRNA + GTP + H(+) = a 5'-end (5'-triphosphoguanosine)-ribonucleoside in mRNA + diphosphate. Second step of mRNA capping. Transfer of the GMP moiety of GTP to the 5'-end of RNA via an enzyme-GMP covalent reaction intermediate. The protein is mRNA-capping enzyme subunit alpha (ceg1) of Schizosaccharomyces pombe (strain 972 / ATCC 24843) (Fission yeast).